The following is a 338-amino-acid chain: Ribosomal RNA small subunit methyltransferase H (338 aa).

S-adenosyl-L-methionine contacts are provided by residues 53–55 (GGH), Asp72, Tyr99, Asp123, and Gln130. The segment at 277–298 (ITPRSKSKSPEGLPVELPGMGP) is disordered.

Belongs to the methyltransferase superfamily. RsmH family.

It localises to the cytoplasm. The catalysed reaction is cytidine(1402) in 16S rRNA + S-adenosyl-L-methionine = N(4)-methylcytidine(1402) in 16S rRNA + S-adenosyl-L-homocysteine + H(+). Specifically methylates the N4 position of cytidine in position 1402 (C1402) of 16S rRNA. The protein is Ribosomal RNA small subunit methyltransferase H of Rhodococcus opacus (strain B4).